A 215-amino-acid chain; its full sequence is Redox-sensing transcriptional repressor Rex (215 aa).

Positions 18-57 form a DNA-binding region, H-T-H motif; the sequence is LYYRFLKNLHASGKQRVSSAELSDAVKVDSATIRRDFSYF. 92–97 contributes to the NAD(+) binding site; that stretch reads GVGNLG.

It belongs to the transcriptional regulatory Rex family. Homodimer.

It localises to the cytoplasm. Its function is as follows. Modulates transcription in response to changes in cellular NADH/NAD(+) redox state. The protein is Redox-sensing transcriptional repressor Rex of Bacillus subtilis (strain 168).